Reading from the N-terminus, the 270-residue chain is NAD kinase (270 aa).

Residue Asp63 is the Proton acceptor of the active site. NAD(+) is bound by residues 63–64 (DG), 131–132 (NE), Lys142, Arg159, Asp161, 172–177 (TAYAMS), Ala196, and Gln230.

This sequence belongs to the NAD kinase family. Requires a divalent metal cation as cofactor.

It is found in the cytoplasm. It catalyses the reaction NAD(+) + ATP = ADP + NADP(+) + H(+). In terms of biological role, involved in the regulation of the intracellular balance of NAD and NADP, and is a key enzyme in the biosynthesis of NADP. Catalyzes specifically the phosphorylation on 2'-hydroxyl of the adenosine moiety of NAD to yield NADP. This Methanoculleus marisnigri (strain ATCC 35101 / DSM 1498 / JR1) protein is NAD kinase.